The primary structure comprises 277 residues: UBX domain-containing protein 8 (277 aa).

Residue Met-1 is a topological domain, cytoplasmic. A helical transmembrane segment spans residues 2 to 22 (ASRGVVGLFLLSALPLLCLEL). Residues 23–33 (RRGIPSLGIKD) are Lumenal-facing. Residues 34 to 54 (LILLSGRIFLLLALLTLVISV) form a helical membrane-spanning segment. Residues 55–277 (TTSWFNSLKP…NVEEKEQSSQ (223 aa)) are Cytoplasmic-facing. The segment at 64–89 (PSQGHLKEGEKENEKRRRLVRERQQE) is disordered. Positions 68–89 (HLKEGEKENEKRRRLVRERQQE) are enriched in basic and acidic residues. The region spanning 193-269 (TAEEVVTVAL…GITVDTVLNV (77 aa)) is the UBX domain.

As to quaternary structure, interacts with SYVN1 and VCP. Highly expressed in gonads. In testis, expressed in post-meiotic round spermatids, while in ovaries it is expressed in granulosa cells.

The protein localises to the endoplasmic reticulum membrane. Its function is as follows. Involved in endoplasmic reticulum-associated degradation (ERAD) for misfolded lumenal proteins, possibly by tethering VCP to the endoplasmic reticulum membrane. May play a role in reproduction. This Mus musculus (Mouse) protein is UBX domain-containing protein 8 (Ubxn8).